The following is an 834-amino-acid chain: MKHTLALLAPLLGLGLGLALSQLAAGATDCKFLGPAEHLTFTPAARARWLAPRVRAPGLLDSLYGTVRRFLSVVQLNPFPSELVKALLNELASVKVNEVVRYEAGYVVCAVIAGLYLLLVPTAGLCFCCCRCHRRCGGRVKTEHKALACERAALMVFLLLTTLLLLIGVVCAFVTNQRTHEQMGPSIEAMPETLLSLWGLVSDVPQELQAVAQQFSLPQEQVSEELDGVGVSIGSAIHTQLRSSVYPLLAAVGSLGQVLQVSVHHLQTLNATVVELQAGQQDLEPAIREHRDRLLELLQEARCQGDCAGALSWARTLELGADFSQVPSVDHVLHQLKGVPEANFSSMVQEENSTFNALPALAAMQTSSVVQELKKAVAQQPEGVRTLAEGFPGLEAASRWAQALQEVEESSRPYLQEVQRYETYRWIVGCVLCSVVLFVVLCNLLGLNLGIWGLSARDDPSHPEAKGEAGARFLMAGVGLSFLFAAPLILLVFATFLVGGNVQTLVCQSWENGELFEFADTPGNLPPSMNLSQLLGLRKNISIHQAYQQCKEGAALWTVLQLNDSYDLEEHLDINQYTNKLRQELQSLKVDTQSLDLLSSAARRDLEALQSSGLQRIHYPDFLVQIQRPVVKTSMEQLAQELQGLAQAQDNSVLGQRLQEEAQGLRNLHQEKVVPQQSLVAKLNLSVRALESSAPNLQLETSDVLANVTYLKGELPAWAARILRNVSECFLAREMGYFSQYVAWVREEVTQRIATCQPLSGALDNSRVILCDMMADPWNAFWFCLAWCTFFLIPSIIFAVKTSKYFRPIRKRLSSTSSEETQLFHIPRVTSLKL.

The first 26 residues, 1-26 (MKHTLALLAPLLGLGLGLALSQLAAG), serve as a signal peptide directing secretion. The Extracellular segment spans residues 27-106 (ATDCKFLGPA…NEVVRYEAGY (80 aa)). A helical transmembrane segment spans residues 107–127 (VVCAVIAGLYLLLVPTAGLCF). At 128–153 (CCCRCHRRCGGRVKTEHKALACERAA) the chain is on the cytoplasmic side. The helical transmembrane segment at 154 to 174 (LMVFLLLTTLLLLIGVVCAFV) threads the bilayer. Over 175 to 426 (TNQRTHEQMG…EVQRYETYRW (252 aa)) the chain is Extracellular. The N-linked (GlcNAc...) asparagine glycan is linked to asparagine 270. The helical transmembrane segment at 427-447 (IVGCVLCSVVLFVVLCNLLGL) threads the bilayer. Residues 448–472 (NLGIWGLSARDDPSHPEAKGEAGAR) lie on the Cytoplasmic side of the membrane. Residues 473-493 (FLMAGVGLSFLFAAPLILLVF) form a helical membrane-spanning segment. The Extracellular portion of the chain corresponds to 494–779 (ATFLVGGNVQ…LCDMMADPWN (286 aa)). The residue at position 727 (serine 727) is a Phosphoserine. The helical transmembrane segment at 780 to 800 (AFWFCLAWCTFFLIPSIIFAV) threads the bilayer. Residues 801–834 (KTSKYFRPIRKRLSSTSSEETQLFHIPRVTSLKL) are Cytoplasmic-facing. Serine 818 carries the phosphoserine modification.

It belongs to the prominin family. As to quaternary structure, binds cholesterol. Post-translationally, glycosylated. As to expression, present in saliva within small membrane particles (at protein level). Expressed in kidney, prostate, trachea, esophagus, salivary gland, thyroid gland, mammary gland adrenal gland, placenta, stomach, spinal cord and liver. In submucosal tumor, expressed in spindle-shaped or stellate stromal cells. Expressed in prostate cancer cell lines.

It localises to the apical cell membrane. The protein localises to the basolateral cell membrane. Its subcellular location is the cell projection. It is found in the microvillus membrane. The protein resides in the cilium membrane. The chain is Prominin-2 (PROM2) from Homo sapiens (Human).